A 1040-amino-acid polypeptide reads, in one-letter code: Multidrug resistance protein MdtB (1040 aa).

A run of 12 helical transmembrane segments spans residues 25 to 45 (LLMA…PVAA), 347 to 367 (LMLA…NIPA), 369 to 389 (IIPG…MVFL), 396 to 416 (LTLM…IVVI), 440 to 460 (IGFT…PLLF), 472 to 492 (FAVT…TLTP), 537 to 557 (WLTL…WIVI), 863 to 883 (LGST…VLGV), 888 to 908 (FIHP…ALLA), 910 to 930 (IIAG…LIGI), 968 to 988 (ILMT…STGV), and 998 to 1018 (IAMV…TPVI).

It belongs to the resistance-nodulation-cell division (RND) (TC 2.A.6) family. MdtB subfamily. In terms of assembly, part of a tripartite efflux system composed of MdtA, MdtB and MdtC. MdtB forms a heteromultimer with MdtC.

The protein localises to the cell inner membrane. This chain is Multidrug resistance protein MdtB, found in Salmonella gallinarum (strain 287/91 / NCTC 13346).